Here is a 74-residue protein sequence, read N- to C-terminus: MKKSVVAKIIAGSTLVIGSSAFAADDATSQAKAAFDSLTAQATEMSGYAWALVVLVVGATVGIKLFKKFVSRAS.

An N-terminal signal peptide occupies residues 1–23; the sequence is MKKSVVAKIIAGSTLVIGSSAFA. The Periplasmic segment spans residues 24–45; it reads ADDATSQAKAAFDSLTAQATEM. A helical transmembrane segment spans residues 46–66; sequence SGYAWALVVLVVGATVGIKLF. Topologically, residues 67-74 are cytoplasmic; sequence KKFVSRAS.

Belongs to the inovirus capsid protein family. Homomultimerizes. There are several thousands of this protein in the phage capsid.

The protein localises to the virion. The protein resides in the host membrane. Its function is as follows. Self assembles to form a helical capsid wrapping up the viral genomic DNA. The capsid displays a filamentous structure with a length of 760-1950 nm and a width of 6-8 nm. The virion assembly and budding take place at the host inner membrane. The sequence is that of Capsid protein G8P (VIII) from Escherichia coli (Bacteriophage If1).